The chain runs to 437 residues: Probable N-acetylmuramidase (437 aa).

Residues 1–57 form the signal peptide; it reads MPVSRVKVKNRHLKKKTKKPLAFYKPATKFAGAVLIAGTLTTTHELLLQQTSPMVQA. Disordered regions lie at residues 217-244, 290-320, and 367-392; these read SSAG…SSTT, ASST…SQTT, and AASN…NSNA. The LysM 1 domain maps to 243–286; the sequence is TTYTVKSGDTLWGISQRYGISVAQIQSANNLKSTIIYIGQKLVL. The span at 290 to 317 shows a compositional bias: low complexity; that stretch reads ASSTNSGGSNNSASTTPTTSVTPAKPTS. The LysM 2 domain occupies 319–362; that stretch reads TTVKVKSGDTLWALSVKYKTSIAQLKSWNHLSSDTIYIGQNLIV. The LysM 3 domain occupies 393–436; sequence SIHKVVKGDTLWGLSQKSGSPIASIKAWNHLSSDTILIGQYLRI.

It belongs to the glycosyl hydrolase 73 family.

It is found in the secreted. It carries out the reaction Hydrolysis of (1-&gt;4)-beta-linkages between N-acetylmuramic acid and N-acetyl-D-glucosamine residues in a peptidoglycan and between N-acetyl-D-glucosamine residues in chitodextrins.. Its function is as follows. Hydrolyzes the cell wall of L.lactis and M.lysodeikticus. Required for cell separation during growth. The sequence is that of Probable N-acetylmuramidase (acmA) from Lactococcus lactis subsp. cremoris (strain MG1363).